Here is a 228-residue protein sequence, read N- to C-terminus: Heptaprenylglyceryl phosphate synthase (228 aa).

Lys-12 contacts sn-glycerol 1-phosphate. Mg(2+) is bound by residues Asp-14 and Ser-40. Sn-glycerol 1-phosphate-binding positions include 158–163 (YLEYSG), Gly-188, and 208–209 (GN).

The protein belongs to the GGGP/HepGP synthase family. Group I subfamily. As to quaternary structure, homodimer. It depends on Mg(2+) as a cofactor.

It carries out the reaction sn-glycerol 1-phosphate + all-trans-heptaprenyl diphosphate = 3-heptaprenyl-sn-glycero-1-phosphate + diphosphate. It functions in the pathway membrane lipid metabolism; glycerophospholipid metabolism. Prenyltransferase that catalyzes in vivo the transfer of the heptaprenyl moiety of heptaprenyl pyrophosphate (HepPP; 35 carbon atoms) to the C3 hydroxyl of sn-glycerol-1-phosphate (G1P), producing heptaprenylglyceryl phosphate (HepGP). This reaction is an ether-bond-formation step in the biosynthesis of archaea-type G1P-based membrane lipids found in Bacillales. To a much lesser extent, is also able to use geranyl diphosphate (GPP; C10) and geranylgeranyl diphosphate (GGPP; C20) as the prenyl donors, but not farnesyl pyrophosphate (FPP; C15). Cannot use glycerol-3-phosphate (G3P) or 3-phosphoglycerate (3PG) as an acceptor. The sequence is that of Heptaprenylglyceryl phosphate synthase from Bacillus subtilis (strain 168).